The primary structure comprises 508 residues: Lysine--tRNA ligase (508 aa).

The Mg(2+) site is built by glutamate 416 and glutamate 423.

Belongs to the class-II aminoacyl-tRNA synthetase family. In terms of assembly, homodimer. Mg(2+) is required as a cofactor.

The protein resides in the cytoplasm. It catalyses the reaction tRNA(Lys) + L-lysine + ATP = L-lysyl-tRNA(Lys) + AMP + diphosphate. This Prochlorococcus marinus (strain MIT 9303) protein is Lysine--tRNA ligase.